The chain runs to 168 residues: Photosystem I assembly protein Ycf3 (168 aa).

TPR repeat units follow at residues 35–68 (AFTY…EIDP), 72–105 (SYIL…NPFL), and 120–153 (GEQA…TPGN).

It belongs to the Ycf3 family.

It localises to the plastid. It is found in the chloroplast thylakoid membrane. Functionally, essential for the assembly of the photosystem I (PSI) complex. May act as a chaperone-like factor to guide the assembly of the PSI subunits. In Illicium oligandrum (Star anise), this protein is Photosystem I assembly protein Ycf3.